A 468-amino-acid polypeptide reads, in one-letter code: Cysteine--tRNA ligase (468 aa).

A Zn(2+)-binding site is contributed by cysteine 27. Residues 29–39 carry the 'HIGH' region motif; the sequence is PTVYNYFHIGN. Zn(2+) contacts are provided by cysteine 207, histidine 232, and glutamate 236. The short motif at 264–268 is the 'KMSKS' region element; it reads KMAKS. Residue lysine 267 coordinates ATP.

Belongs to the class-I aminoacyl-tRNA synthetase family. Monomer. It depends on Zn(2+) as a cofactor.

The protein resides in the cytoplasm. It carries out the reaction tRNA(Cys) + L-cysteine + ATP = L-cysteinyl-tRNA(Cys) + AMP + diphosphate. This Acetivibrio thermocellus (strain ATCC 27405 / DSM 1237 / JCM 9322 / NBRC 103400 / NCIMB 10682 / NRRL B-4536 / VPI 7372) (Clostridium thermocellum) protein is Cysteine--tRNA ligase.